The primary structure comprises 305 residues: MLRIAEEVTTALEEGRAVVALESTLISHGLPYPHNLAVAEGLEAEVRAAGAVPATIGLIEGVPVIGLNGNELERLAVGGDRVRKLSRRDIGAAIVDHADGATTVAATMALAAAAGIEVFATGGIGGVHRGATHSWDVSADLTELGRTPVLVVCAGAKAILDLPATLEYLETQGVPVVGYQTVEFPAFYTPHSGLTVAAVAADALAAARMWRIQRRYHTFAAPGGMLLCVPPPERHALEREAVEAAIGRALARAEAEGVRGPAVTPFLLAAMAEETSGESIETNIALLRNNTRVAAEVAVRISELG.

Catalysis depends on Glu22, which acts as the Proton donor. 2 residues coordinate substrate: Lys84 and Val104. A Mn(2+)-binding site is contributed by Asp136. A substrate-binding site is contributed by 138–140; it reads SAD. The active-site Nucleophile is Lys157.

This sequence belongs to the pseudouridine-5'-phosphate glycosidase family. In terms of assembly, homotrimer. It depends on Mn(2+) as a cofactor.

It carries out the reaction D-ribose 5-phosphate + uracil = psi-UMP + H2O. Its function is as follows. Catalyzes the reversible cleavage of pseudouridine 5'-phosphate (PsiMP) to ribose 5-phosphate and uracil. Functions biologically in the cleavage direction, as part of a pseudouridine degradation pathway. The polypeptide is Pseudouridine-5'-phosphate glycosidase (Chloroflexus aurantiacus (strain ATCC 29364 / DSM 637 / Y-400-fl)).